We begin with the raw amino-acid sequence, 1071 residues long: MPSLMSFGSCQWIDQGRFSRSLYRNFKTFKLHEMHGLCMPNLLLNPDIHGDRIIFVCCDDLWEHDLKSGSTRKIVSNLGVINNARFFPDGRKIAIRVMRGSSLNTADLYFYNGENGEIKRITYFSGKSTGRRMFTDVAGFDPDGNLIISTDAMQPFSSMTCLYRVENDGINFVPLNLGPATHILFADGRRVIGRNTFELPHWKGYRGGTRGKIWIEVNSGAFKKIVDMSTHVSSPVIVGHRIYFITDIDGFGQIYSTDLDGKDLRKHTSFTDYYPRHLNTDGRRILFSKGGSIYIFNPDTEKIEKIEIGDLESPEDRIISIPSKFAEDFSPLDGDLIAFVSRGQAFIQDVSGTYVLKVPEPLRIRYVRRGGDTKVAFIHGTREGDFLGIYDYRTGKAEKFEENLGNVFAMGVDRNGKFAVVANDRFEIMTVDLETGKPTVIERSREAMITDFTISDNSRFIAYGFPLKHGETDGYVMQAIHVYDMEGRKIFAATTENSHDYAPAFDADSKNLYYLSYRSLDPSPDRVVLNFSFEVVSKPFVIPLIPGSPNPTKLVPRSMTSEAGEYDLNDMYKRSSPINVDPGDYRMIIPLESSILIYSVPVHGEFAAYYQGAPEKGVLLKYDVKTRKVTEVKNNLTDLRLSADRKTVMVRKDDGKIYTFPLEKPEDERTVETDKRPLVSSIHEEFLQMYDEAWKLARDNYWNEAVAKEISERIYEKYRNLVPLCKTRYDLSNVIVEMQGEYRTSHSYEMGGTFTDKDPFRSGRIACDFKLDGDHYVVAKAYAGDYSNEGEKSPIFEYGIDPTGYLIEDIDGETVGAGSNIYRVLSEKAGTSARIRLSGKGGDKRDLMIDILDDDRFIRYRSWVEANRRYVHERSKGTIGYIHIPDMGMMGLNEFYRLFINESSYQGLIVDVRFNGGGFVSQLIIEKLMNKRIGYDNPRRGTLSPYPTNSVRGKIIAITNEYAGSDGDIFSFSFKKLGLGKLIGTRTWGGVVGITPKRRLIDGTVLTQPEFAFWFRDAGFGVENYGVDPDVEIEYAPHDYLSGKDPQIDYAIDALIEELRNWNEELPQRPS.

The segment at 39–310 (MPNLLLNPDI…EKIEKIEIGD (272 aa)) is six-bladed beta propeller. Positions 131–132 (RR) are binds the substrate's C-terminus. Residues 326-675 (AEDFSPLDGD…EDERTVETDK (350 aa)) are seven-bladed beta propeller. A C-1; helical bundle region spans residues 679 to 745 (VSSIHEEFLQ…VEMQGEYRTS (67 aa)). Histidine 746 serves as the catalytic Charge relay system. A PDZ-like region spans residues 761–855 (RSGRIACDFK…DLMIDILDDD (95 aa)). The segment at 856–1061 (RFIRYRSWVE…IDALIEELRN (206 aa)) is C-2; alpha-beta sandwich. Residue 916-918 (GGG) coordinates substrate. Serine 965 acts as the Nucleophile in catalysis. 993-995 (GIT) is a binding site for substrate. Catalysis depends on glutamate 1023, which acts as the Charge relay system.

It belongs to the peptidase S41B family. As to quaternary structure, part of the Tricorn proteolytic complex. Assembles to form a hexameric toroid, 20 copies of which may then assemble to form an icosahedral supermolecule of 14.6 MDa.

Its subcellular location is the cytoplasm. Tricorn degrades oligopeptides (probably derived from the proteasome) and channels the products to F1, F2 and F3 proteases, which then catalyze the terminal degradation step, yielding free amino acids. The polypeptide is Tricorn protease (tri) (Thermoplasma acidophilum (strain ATCC 25905 / DSM 1728 / JCM 9062 / NBRC 15155 / AMRC-C165)).